The primary structure comprises 342 residues: Ketoreductase nvfG (342 aa).

Belongs to the NAD(P)-dependent epimerase/dehydratase family. Dihydroflavonol-4-reductase subfamily.

Its pathway is secondary metabolite biosynthesis; terpenoid biosynthesis. Functionally, ketoreductase; part of the gene cluster that mediates the biosynthesis of novofumigatonin, a heavily oxygenated meroterpenoid containing a unique orthoester moiety. The first step of the pathway is the synthesis of 3,5-dimethylorsellinic acid (DMOA) by the polyketide synthase nvfA via condensation of one acetyl-CoA starter unit with 3 malonyl-CoA units and 2 methylations. DMOA is then converted to farnesyl-DMOA by the farnesyltransferase nvfB. Epoxydation by FAD-dependent monooxygenase nvfK, followed by a protonation-initiated cyclization catalyzed by the terpene cyclase nvfL leads to the production of asnavolin H. The short chain dehydrogenase nvfC then as a 3-OH dehydrogenase of asnovolin H to yield chemesin D. There are two branches to synthesize asnovolin A from chemesin D. In one branch, chemesin D undergoes Baeyer-Villiger oxidation by nvfH, methylation by nvfJ, and enoyl reduction by the nvfM D enoylreductase that reduces the double bond between C-5'and C-6', to form respectively asnovolin I, asnovolin K, and asnovolin A. In the other branch, the methylation precedes the Baeyer-Villiger oxidation and the enoyl reduction to yield asnovolin A via the asnovolin J intermediate. Asnovolin A is further converted to fumigatonoid A by the Fe(II)/2-oxoglutarate-dependent dioxygenase nvfI that catalyzes an endoperoxidation reaction. The alpha/beta hydrolase nvfD then acts as an epimerase that converts fumigatonoid A to its C-5' epimer, which then undergoes spontaneous or nvfD-catalyzed lactonization. The following step utilizes the ketoreductase nvfG to produce fumigatonoid B. The dioxygenase nvfE further converts fumigatonoid B into fumigatonoid C. Finally the Fe(II)/2-oxoglutarate-dependent dioxygenase nvfF catalyzes two rounds of oxidation to transform fumigatonoid C into the end product, novofumigatonin A. This chain is Ketoreductase nvfG, found in Aspergillus novofumigatus (strain IBT 16806).